Consider the following 187-residue polypeptide: Tumor necrosis factor ligand superfamily member 4 (187 aa).

The Cytoplasmic portion of the chain corresponds to 1–23 (MEGVRPLEENVGNAPRPRFERNK). A helical; Signal-anchor for type II membrane protein membrane pass occupies residues 24-44 (LLLVASVVQALGLLLCLTYVC). Residues 45 to 187 (QHSHAPEVSL…LQNPGGYCAP (143 aa)) lie on the Extracellular side of the membrane. In terms of domain architecture, THD spans 58-177 (PIENIMTQLQ…SVNAGELIVI (120 aa)). 2 disulfides stabilise this stretch: C74/C164 and C101/C185. N94 and N156 each carry an N-linked (GlcNAc...) asparagine glycan.

This sequence belongs to the tumor necrosis factor family. Homotrimer.

It is found in the membrane. In terms of biological role, cytokine that binds to TNFRSF4. Co-stimulates T-cell proliferation and cytokine production. The chain is Tumor necrosis factor ligand superfamily member 4 (TNFSF4) from Oryctolagus cuniculus (Rabbit).